The following is a 127-amino-acid chain: MSDNEDNFDGDDFDDVEEDEGLDDLENAEEEGQENVEILPSGERPQANQKRITTPYMTKYERARVLGTRALQIAMCAPVMVELEGETDPLLIAMKELKARKIPIIIRRYLPDGSYEDWGVDELIISD.

Residues 1–34 (MSDNEDNFDGDDFDDVEEDEGLDDLENAEEEGQE) are compositionally biased toward acidic residues. Positions 1-53 (MSDNEDNFDGDDFDDVEEDEGLDDLENAEEEGQENVEILPSGERPQANQKRIT) are disordered. Position 2 is an N-acetylserine (Ser2). Phosphoserine; by CK2 is present on Ser2.

This sequence belongs to the archaeal Rpo6/eukaryotic RPB6 RNA polymerase subunit family. Component of the RNA polymerase I (Pol I), RNA polymerase II (Pol II) and RNA polymerase III (Pol III) complexes consisting of at least 13, 12 and 17 subunits, respectively. Pol I complex consists of a ten-subunit catalytic core composed of POLR1A/RPA1, POLR1B/RPA2, POLR1C/RPAC1, POLR1D/RPAC2, POLR1H/RPA12, POLR2E/RPABC1, POLR2F/RPABC2, POLR2H/RPABC3, POLR2K/RPABC4 and POLR2L/RPABC5; a mobile stalk subunit POLR1F/RPA43 protruding from the core and additional subunits homologous to general transcription factors POLR1E/RPA49 and POLR1G/RPA34. Part of Pol I pre-initiation complex (PIC), in which Pol I core assembles with RRN3 and promoter-bound UTBF and SL1/TIF-IB complex. Pol II complex contains a ten-subunit catalytic core composed of POLR2A/RPB1, POLR2B/RPB2, POLR2C/RPB3, POLR2I/RPB9, POLR2J/RPB11, POLR2E/RPABC1, POLR2F/RPABC2, POLR2H/RPABC3, POLR2K/RPABC4 and POLR2L/RPABC5 and a mobile stalk composed of two subunits POLR2D/RPB4 and POLR2G/RPB7. Part of Pol II(G) complex, in which Pol II core associates with an additional subunit POLR2M; unlike conventional Pol II, Pol II(G) functions as a transcriptional repressor. Part of TBP-based Pol II pre-initiation complex (PIC), in which Pol II core assembles with general transcription factors and other specific initiation factors including GTF2E1, GTF2E2, GTF2F1, GTF2F2, TCEA1, ERCC2, ERCC3, GTF2H2, GTF2H3, GTF2H4, GTF2H5, GTF2A1, GTF2A2, GTF2B and TBP; this large multi-subunit PIC complex mediates DNA unwinding and targets Pol II core to the transcription start site where the first phosphodiester bond forms. Pol III complex consists of a ten-subunit catalytic core composed of POLR3A/RPC1, POLR3B/RPC2, POLR1C/RPAC1, POLR1D/RPAC2, POLR3K/RPC10, POLR2E/RPABC1, POLR2F/RPABC2, POLR2H/RPABC3, POLR2K/RPABC4 and POLR2L/RPABC5; a mobile stalk composed of two subunits POLR3H/RPC8 and CRCP/RPC9, protruding from the core and functioning primarily in transcription initiation; and additional subunits homologous to general transcription factors of the RNA polymerase II machinery, POLR3C/RPC3-POLR3F/RPC6-POLR3G/RPC7 heterotrimer required for transcription initiation and POLR3D/RPC4-POLR3E/RPC5 heterodimer involved in both transcription initiation and termination.

It is found in the nucleus. The protein resides in the nucleolus. Its function is as follows. DNA-dependent RNA polymerase catalyzes the transcription of DNA into RNA using the four ribonucleoside triphosphates as substrates. Common component of RNA polymerases I, II, and III which synthesize ribosomal RNA precursors, mRNA precursors and many functional non-coding RNAs, and small RNAs, such as 5S rRNA and tRNAs, respectively. Pol II is the central component of the basal RNA polymerase II transcription machinery. Pols are composed of mobile elements that move relative to each other. In Pol II, POLR2F/RPABC2 is part of the clamp element and together with parts of POLR2A/RPB1 and POLR2B/RPB2 forms a pocket to which the POLR2D/RPB4-POLR2G/RPB7 subcomplex binds. The sequence is that of DNA-directed RNA polymerases I, II, and III subunit RPABC2 from Mus musculus (Mouse).